Here is an 820-residue protein sequence, read N- to C-terminus: Penicillin-binding protein 1A (820 aa).

The disordered stretch occupies residues 1–120; that stretch reads MNSDGRHHQS…PAGRLPQPRV (120 aa). Residues 41-53 show a composition bias toward basic and acidic residues; the sequence is TDDRSAPHADSIE. Residues 139 to 159 traverse the membrane as a helical segment; sequence LTAAVVILLPMVTFTMAYLIV. Residues 180–360 form a transglycosylase region; it reads GSEIAKIVPP…RWNWVLDGMV (181 aa). The Proton donor; for transglycosylase activity role is filled by glutamate 213. Residues 453-743 are transpeptidase; the sequence is AVVSIDPHNG…PSDIWKATMD (291 aa). Serine 487 (acyl-ester intermediate; for transpeptidase activity) is an active-site residue. The span at 792 to 804 shows a compositional bias: low complexity; that stretch reads ITIPIGPPTTITL. The segment at 792–820 is disordered; that stretch reads ITIPIGPPTTITLAPPPPAPPAATPTPPP. The span at 805 to 820 shows a compositional bias: pro residues; sequence APPPPAPPAATPTPPP.

In the N-terminal section; belongs to the glycosyltransferase 51 family. This sequence in the C-terminal section; belongs to the transpeptidase family. As to quaternary structure, interacts with RipA via its transpeptidase domain (residues 561-820).

It is found in the cell membrane. The catalysed reaction is [GlcNAc-(1-&gt;4)-Mur2Ac(oyl-L-Ala-gamma-D-Glu-L-Lys-D-Ala-D-Ala)](n)-di-trans,octa-cis-undecaprenyl diphosphate + beta-D-GlcNAc-(1-&gt;4)-Mur2Ac(oyl-L-Ala-gamma-D-Glu-L-Lys-D-Ala-D-Ala)-di-trans,octa-cis-undecaprenyl diphosphate = [GlcNAc-(1-&gt;4)-Mur2Ac(oyl-L-Ala-gamma-D-Glu-L-Lys-D-Ala-D-Ala)](n+1)-di-trans,octa-cis-undecaprenyl diphosphate + di-trans,octa-cis-undecaprenyl diphosphate + H(+). It carries out the reaction Preferential cleavage: (Ac)2-L-Lys-D-Ala-|-D-Ala. Also transpeptidation of peptidyl-alanyl moieties that are N-acyl substituents of D-alanine.. The protein operates within cell wall biogenesis; peptidoglycan biosynthesis. Cell wall formation. Synthesis of cross-linked peptidoglycan from the lipid intermediates. The enzyme has a penicillin-insensitive transglycosylase N-terminal domain (formation of linear glycan strands) and a penicillin-sensitive transpeptidase C-terminal domain (cross-linking of the peptide subunits). Has little peptidoglycan hydrolytic activity; however it inhibits the synergistic peptidoglycan hydrolysis of RipA plus RpfB. This is Penicillin-binding protein 1A (ponA1) from Mycobacterium tuberculosis (strain ATCC 25618 / H37Rv).